The chain runs to 369 residues: tRNA/tmRNA (uracil-C(5))-methyltransferase (369 aa).

Residues glutamine 190, tyrosine 218, asparagine 223, glutamate 239, and aspartate 301 each coordinate S-adenosyl-L-methionine. Catalysis depends on cysteine 326, which acts as the Nucleophile. Glutamate 360 functions as the Proton acceptor in the catalytic mechanism.

Belongs to the class I-like SAM-binding methyltransferase superfamily. RNA M5U methyltransferase family. TrmA subfamily.

It carries out the reaction uridine(54) in tRNA + S-adenosyl-L-methionine = 5-methyluridine(54) in tRNA + S-adenosyl-L-homocysteine + H(+). The enzyme catalyses uridine(341) in tmRNA + S-adenosyl-L-methionine = 5-methyluridine(341) in tmRNA + S-adenosyl-L-homocysteine + H(+). Functionally, dual-specificity methyltransferase that catalyzes the formation of 5-methyluridine at position 54 (m5U54) in all tRNAs, and that of position 341 (m5U341) in tmRNA (transfer-mRNA). The sequence is that of tRNA/tmRNA (uracil-C(5))-methyltransferase from Vibrio atlanticus (strain LGP32) (Vibrio splendidus (strain Mel32)).